Here is a 262-residue protein sequence, read N- to C-terminus: Cytochrome c oxidase subunit 3 (262 aa).

Transmembrane regions (helical) follow at residues 39-59, 83-103, 120-140, 163-183, 201-221, and 240-260; these read YTMT…YQWW, GMIL…WAFF, VGIA…ILLA, GLFF…YEYI, ATGF…ICFL, and AWYW…IYWW.

This sequence belongs to the cytochrome c oxidase subunit 3 family. As to quaternary structure, component of the cytochrome c oxidase (complex IV, CIV), a multisubunit enzyme composed of a catalytic core of 3 subunits and several supernumerary subunits. The complex exists as a monomer or a dimer and forms supercomplexes (SCs) in the inner mitochondrial membrane with ubiquinol-cytochrome c oxidoreductase (cytochrome b-c1 complex, complex III, CIII).

The protein resides in the mitochondrion inner membrane. The catalysed reaction is 4 Fe(II)-[cytochrome c] + O2 + 8 H(+)(in) = 4 Fe(III)-[cytochrome c] + 2 H2O + 4 H(+)(out). Functionally, component of the cytochrome c oxidase, the last enzyme in the mitochondrial electron transport chain which drives oxidative phosphorylation. The respiratory chain contains 3 multisubunit complexes succinate dehydrogenase (complex II, CII), ubiquinol-cytochrome c oxidoreductase (cytochrome b-c1 complex, complex III, CIII) and cytochrome c oxidase (complex IV, CIV), that cooperate to transfer electrons derived from NADH and succinate to molecular oxygen, creating an electrochemical gradient over the inner membrane that drives transmembrane transport and the ATP synthase. Cytochrome c oxidase is the component of the respiratory chain that catalyzes the reduction of oxygen to water. Electrons originating from reduced cytochrome c in the intermembrane space (IMS) are transferred via the dinuclear copper A center (CU(A)) of subunit 2 and heme A of subunit 1 to the active site in subunit 1, a binuclear center (BNC) formed by heme A3 and copper B (CU(B)). The BNC reduces molecular oxygen to 2 water molecules using 4 electrons from cytochrome c in the IMS and 4 protons from the mitochondrial matrix. The polypeptide is Cytochrome c oxidase subunit 3 (COIII) (Anopheles gambiae (African malaria mosquito)).